A 565-amino-acid chain; its full sequence is Membrane protein insertase YidC (565 aa).

Transmembrane regions (helical) follow at residues 6-26 (VLLI…WGKN), 348-368 (LMAL…SLLH), 370-390 (WGWA…PLSA), 437-457 (GGCF…WVLV), 479-499 (PYFI…KLTP), and 516-536 (PLIF…YWVI).

It belongs to the OXA1/ALB3/YidC family. Type 1 subfamily. As to quaternary structure, interacts with the Sec translocase complex via SecD. Specifically interacts with transmembrane segments of nascent integral membrane proteins during membrane integration.

It localises to the cell inner membrane. Required for the insertion and/or proper folding and/or complex formation of integral membrane proteins into the membrane. Involved in integration of membrane proteins that insert both dependently and independently of the Sec translocase complex, as well as at least some lipoproteins. Aids folding of multispanning membrane proteins. This is Membrane protein insertase YidC from Xylella fastidiosa (strain M12).